The sequence spans 814 residues: DNA gyrase subunit A (814 aa).

The Topo IIA-type catalytic domain occupies 32–499; the sequence is LPDVRDGLKP…GVIEFREEDL (468 aa). Tyr120 acts as the O-(5'-phospho-DNA)-tyrosine intermediate in catalysis. The short motif at 526 to 532 is the GyrA-box element; it reads QHRAGRG.

This sequence belongs to the type II topoisomerase GyrA/ParC subunit family. In terms of assembly, heterotetramer, composed of two GyrA and two GyrB chains. In the heterotetramer, GyrA contains the active site tyrosine that forms a transient covalent intermediate with DNA, while GyrB binds cofactors and catalyzes ATP hydrolysis.

Its subcellular location is the cytoplasm. The enzyme catalyses ATP-dependent breakage, passage and rejoining of double-stranded DNA.. In terms of biological role, a type II topoisomerase that negatively supercoils closed circular double-stranded (ds) DNA in an ATP-dependent manner to modulate DNA topology and maintain chromosomes in an underwound state. Negative supercoiling favors strand separation, and DNA replication, transcription, recombination and repair, all of which involve strand separation. Also able to catalyze the interconversion of other topological isomers of dsDNA rings, including catenanes and knotted rings. Type II topoisomerases break and join 2 DNA strands simultaneously in an ATP-dependent manner. The sequence is that of DNA gyrase subunit A from Dehalogenimonas lykanthroporepellens (strain ATCC BAA-1523 / JCM 15061 / BL-DC-9).